Here is a 504-residue protein sequence, read N- to C-terminus: 13S globulin seed storage protein 2 (504 aa).

A signal peptide spans 1-20 (MSTKLILSFSLCLMVLSCSA). 2 disulfide bridges follow: C46–C79 and C122–C320. One can recognise a Cupin type-1 1 domain in the interval 51 to 265 (LTASEPSRRV…FRDVDRETIS (215 aa)). Disordered stretches follow at residues 128–158 (SDSE…GDQH), 214–237 (GQSQ…DDEA), and 289–314 (QDFE…RSNG). 2 stretches are compositionally biased toward basic and acidic residues: residues 144-158 (RQSE…GDQH) and 218-231 (RETR…QSRE). Residues 326-475 (RNFNTPTNTY…SYDISTKEAY (150 aa)) enclose the Cupin type-1 2 domain.

It belongs to the 11S seed storage protein (globulins) family. As to quaternary structure, hexamer; each subunit is composed of an acidic and a basic chain derived from a single precursor and linked by a disulfide bond.

Functionally, seed storage protein. In Fagopyrum esculentum (Common buckwheat), this protein is 13S globulin seed storage protein 2 (FA18).